Consider the following 555-residue polypeptide: CTP synthase (555 aa).

The tract at residues 1–265 (MTRYIFITGG…GNRVCEKLNI (265 aa)) is amidoligase domain. Residue Ser13 participates in CTP binding. Residue Ser13 coordinates UTP. ATP contacts are provided by residues 14–19 (SLGKGI) and Asp71. Residues Asp71 and Glu139 each contribute to the Mg(2+) site. Residues 146–148 (DIE), 186–191 (KTKPTQ), and Lys222 each bind CTP. UTP-binding positions include 186–191 (KTKPTQ) and Lys222. Residues 290–541 (TVAVVGKYVD…IKAGLAAKEA (252 aa)) enclose the Glutamine amidotransferase type-1 domain. L-glutamine is bound at residue Gly351. The active-site Nucleophile; for glutamine hydrolysis is Cys378. L-glutamine is bound by residues 379–382 (LGMQ), Glu402, and Arg469. Catalysis depends on residues His514 and Glu516.

The protein belongs to the CTP synthase family. As to quaternary structure, homotetramer.

It carries out the reaction UTP + L-glutamine + ATP + H2O = CTP + L-glutamate + ADP + phosphate + 2 H(+). The enzyme catalyses L-glutamine + H2O = L-glutamate + NH4(+). The catalysed reaction is UTP + NH4(+) + ATP = CTP + ADP + phosphate + 2 H(+). It functions in the pathway pyrimidine metabolism; CTP biosynthesis via de novo pathway; CTP from UDP: step 2/2. With respect to regulation, allosterically activated by GTP, when glutamine is the substrate; GTP has no effect on the reaction when ammonia is the substrate. The allosteric effector GTP functions by stabilizing the protein conformation that binds the tetrahedral intermediate(s) formed during glutamine hydrolysis. Inhibited by the product CTP, via allosteric rather than competitive inhibition. Its function is as follows. Catalyzes the ATP-dependent amination of UTP to CTP with either L-glutamine or ammonia as the source of nitrogen. Regulates intracellular CTP levels through interactions with the four ribonucleotide triphosphates. This chain is CTP synthase, found in Coxiella burnetii (strain RSA 493 / Nine Mile phase I).